The sequence spans 154 residues: Large ribosomal subunit protein bL9c (154 aa).

Belongs to the bacterial ribosomal protein bL9 family.

The protein localises to the plastid. The protein resides in the chloroplast. Its function is as follows. Binds to the 23S rRNA. The polypeptide is Large ribosomal subunit protein bL9c (Gracilaria tenuistipitata var. liui (Red alga)).